A 188-amino-acid chain; its full sequence is MTSPTVSTDRPVLRYEVLGSRRFSNYWWATVITIGGTGFFLAGLSSYLHVNLLPIGNPVELFFIPQGIAIGFYGVAALLLAIYLWATIGWNVGGGYNEFNKETGIVRIFRWGFPGKNRQVEISARIPDVQAVRIVIREGVNPKRTIYLRLKGRGDIPLTRVGQPIPLTDLENQAAEIASFLGVAIEGL.

Transmembrane regions (helical) follow at residues 28–48 (WATV…SSYL) and 68–88 (IAIG…WATI).

This sequence belongs to the Ycf4 family.

It localises to the cellular thylakoid membrane. Its function is as follows. Seems to be required for the assembly of the photosystem I complex. The protein is Photosystem I assembly protein Ycf4 of Cyanothece sp. (strain PCC 7425 / ATCC 29141).